We begin with the raw amino-acid sequence, 385 residues long: Multidrug resistance protein MdtE (385 aa).

Residues 1–20 form the signal peptide; the sequence is MNRRRKLLIPLLFCGAMLTA. Cys-21 is lipidated: N-palmitoyl cysteine. Cys-21 is lipidated: S-diacylglycerol cysteine.

It belongs to the membrane fusion protein (MFP) (TC 8.A.1) family. In terms of assembly, homotrimer. Part of the tripartite efflux system MdtEF-TolC, which is composed of an inner membrane transporter, MdtF, a membrane fusion protein, MdtE, and an outer membrane component, TolC. The complex forms a large protein conduit and can translocate molecules across both the inner and outer membranes.

It localises to the cell inner membrane. In terms of biological role, part of the tripartite efflux system MdtEF-TolC, which confers resistance to various compounds. In Escherichia coli O157:H7, this protein is Multidrug resistance protein MdtE (mdtE).